A 205-amino-acid polypeptide reads, in one-letter code: Phosphoenolpyruvate guanylyltransferase (205 aa).

Residues threonine 138, glycine 154, and serine 157 each coordinate phosphoenolpyruvate.

It belongs to the CofC family.

It carries out the reaction phosphoenolpyruvate + GTP + H(+) = enolpyruvoyl-2-diphospho-5'-guanosine + diphosphate. It functions in the pathway cofactor biosynthesis; coenzyme F420 biosynthesis. In terms of biological role, guanylyltransferase that catalyzes the activation of phosphoenolpyruvate (PEP) as enolpyruvoyl-2-diphospho-5'-guanosine, via the condensation of PEP with GTP. It is involved in the biosynthesis of coenzyme F420, a hydride carrier cofactor. This Chloroflexus aurantiacus (strain ATCC 29364 / DSM 637 / Y-400-fl) protein is Phosphoenolpyruvate guanylyltransferase.